The chain runs to 587 residues: Putative adenylate cyclase 3 (587 aa).

Residues 12–127 (AILAADAVGY…DGVNVAARIE (116 aa)) enclose the Guanylate cyclase domain. TPR repeat units lie at residues 343-376 (LLVRSRQAILQFNALSSMEARRMLHRVLEIDPGM), 421-454 (PQGHYTLALALSWMRRLDEAEHAAERAIELDPNS), 455-488 (ANAYTALGTIRDFQGRHEEALALYTRAHRLDPQF), 490-522 (LSLHFQGRALLNLGRFDEAEVAFKRRLLLAPRS), and 524-556 (MTRFYLACLYGRTGRHEEARGYWREVLGVNPSF).

This sequence belongs to the adenylyl cyclase class-3 family.

The enzyme catalyses ATP = 3',5'-cyclic AMP + diphosphate. The sequence is that of Putative adenylate cyclase 3 (cya3) from Rhizobium meliloti (strain 1021) (Ensifer meliloti).